A 131-amino-acid polypeptide reads, in one-letter code: UPF0102 protein YraN (131 aa).

Positions methionine 1–threonine 19 are enriched in polar residues. The segment at methionine 1–aspartate 21 is disordered.

Belongs to the UPF0102 family.

The protein is UPF0102 protein YraN of Escherichia coli O127:H6 (strain E2348/69 / EPEC).